Consider the following 145-residue polypeptide: Transcription antitermination protein NusB (145 aa).

Belongs to the NusB family.

Functionally, involved in transcription antitermination. Required for transcription of ribosomal RNA (rRNA) genes. Binds specifically to the boxA antiterminator sequence of the ribosomal RNA (rrn) operons. This is Transcription antitermination protein NusB from Paraburkholderia phymatum (strain DSM 17167 / CIP 108236 / LMG 21445 / STM815) (Burkholderia phymatum).